Consider the following 161-residue polypeptide: Peroxynitrite isomerase (161 aa).

The GXWXGXG motif lies at 17 to 23; sequence GSWVGRG. Heme b is bound at residue histidine 152.

Belongs to the nitrobindin family. In terms of assembly, homodimer. Heme b serves as cofactor.

The enzyme catalyses peroxynitrite = nitrate. It functions in the pathway nitrogen metabolism. Functionally, heme-binding protein able to scavenge peroxynitrite and to protect free L-tyrosine against peroxynitrite-mediated nitration, by acting as a peroxynitrite isomerase that converts peroxynitrite to nitrate. Therefore, this protein likely plays a role in peroxynitrite sensing and in the detoxification of reactive nitrogen and oxygen species (RNS and ROS, respectively). Is able to bind nitric oxide (NO) in vitro, but may act as a sensor of peroxynitrite levels in vivo. The sequence is that of Peroxynitrite isomerase from Mycobacterium leprae (strain TN).